We begin with the raw amino-acid sequence, 85 residues long: Arminin 6494 (85 aa).

A signal peptide spans methionine 1–alanine 18. The propeptide occupies arginine 19–alanine 57. Alanine 82 bears the Alanine amide mark.

It belongs to the arminin family. In terms of tissue distribution, expressed in entodermal epithelium along the body column.

It localises to the secreted. Its subcellular location is the target cell membrane. In terms of biological role, antimicrobial peptide with a broad-spectrum antimicrobial activity. Keeps its antibacterial activity under a wide range of salt concentrations that mimic physiological conditions of human blood, which is surprising, since Hydra is an obligate freshwater animal with nearly no salt tolerance. Does not affect red blood cells. This chain is Arminin 6494, found in Hydra vulgaris (Hydra).